We begin with the raw amino-acid sequence, 598 residues long: Arylsulfate sulfotransferase AssT (598 aa).

The N-terminal stretch at 1-27 (MFHPYRKTLLSGTVALALGLFATGAIA) is a signal peptide. 4-methylumbelliferone contacts are provided by histidine 279 and histidine 383. Cysteine 445 and cysteine 451 form a disulfide bridge. Histidine 463 is a binding site for 4-methylumbelliferone. Catalysis depends on histidine 463, which acts as the Nucleophile; sulfurylated histidine covalent intermediate.

This sequence belongs to the aryl sulfotransferase family. Monomer.

Its subcellular location is the periplasm. The enzyme catalyses an aryl sulfate + a phenol = an aryl sulfate + a phenol. The catalysed reaction is 4-methylumbelliferone sulfate + phenol = phenyl sulfate + 4-methylumbelliferone. It carries out the reaction 2-naphthyl sulfate + phenol = phenyl sulfate + 2-naphthol. Functionally, catalyzes the transfer of a sulfate group from a phenyl sulfate ester to other phenolic compounds. Is able to use several substrate donors and acceptors in vitro: using phenol as an acceptor substrate, 4-methylumbelliferyl sulfate is the best donor substrate, followed by beta-naphthyl sulfate, p-nitrophenyl sulfate (PNS), and alpha-naphthyl sulfate; using PNS as a donor substrate, alpha-naphthol is the best acceptor substrate, followed by phenol, resorcinol, p-acetaminophen, tyramine, and tyrosine. Cannot use 3'-phosphoadenosine-5'-phophosulfate (PAPS), the donor substrate of mammalian sulfotransferase. May be a detoxifying enzyme, converting toxic phenolic compounds into non-toxic materials. This is Arylsulfate sulfotransferase AssT from Lelliottia amnigena (Enterobacter amnigenus).